Reading from the N-terminus, the 105-residue chain is MICOS complex subunit Mic10 (105 aa).

The helical transmembrane segment at 29 to 46 (LLKVTGGVAIGIVASVAF) threads the bilayer. Topologically, residues 47 to 105 (FKSRSWPIWFGSGVGLGTGWSNCRHDFASPYVLHGKRVPAGQDSQGKPAYNIITEQHKQ) are mitochondrial intermembrane. Residues 85–105 (PAGQDSQGKPAYNIITEQHKQ) are disordered.

It belongs to the MICOS complex subunit Mic10 family. As to quaternary structure, component of the mitochondrial contact site and cristae organizing system (MICOS) complex.

The protein localises to the mitochondrion inner membrane. In terms of biological role, component of the MICOS complex, a large protein complex of the mitochondrial inner membrane that plays crucial roles in the maintenance of crista junctions, inner membrane architecture, and formation of contact sites to the outer membrane. The sequence is that of MICOS complex subunit Mic10 from Caenorhabditis elegans.